The sequence spans 504 residues: Flavin-dependent halogenase armH3 (504 aa).

Residues Gly16, Ala19, Glu49, and Ala149 each contribute to the FAD site. Positions 329 and 330 each coordinate chloride. Ile331 contributes to the FAD binding site. The interval 444–475 (NNLRTPVDTGAADVKAKHAPSETDAQNPLQSM) is disordered.

This sequence belongs to the flavin-dependent halogenase family.

It carries out the reaction melleolide F + FADH2 + chloride + O2 = 6'-chloromelleolide F + FAD + 2 H2O + H(+). Flavin-dependent halogenase involved in the biosynthesis of melleolides, a range of antifungal and phytotoxic polyketide derivatives composed of an orsellinic acid (OA) moiety esterified to various sesquiterpene alcohols. The halogenase catalyzes the transfer of a single chlorine atom to the melleolide backbone, resulting in a 6'-chloromelleolide product. The enzyme acts on free substrate and does not depend on carrier-protein-dependent acceptor molecules. The protein is Flavin-dependent halogenase armH3 of Armillaria mellea (Honey mushroom).